Reading from the N-terminus, the 490-residue chain is Betaine aldehyde dehydrogenase (490 aa).

The K(+) site is built by serine 26, isoleucine 27, and aspartate 93. 150–152 (GAW) contacts NAD(+). The active-site Charge relay system is lysine 162. 176-179 (KPSE) is a binding site for NAD(+). Valine 180 contacts K(+). 230–233 (GVAT) contacts NAD(+). Leucine 246 is a K(+) binding site. Glutamate 252 acts as the Proton acceptor in catalysis. NAD(+)-binding residues include glycine 254, cysteine 286, and glutamate 387. The active-site Nucleophile is cysteine 286. At cysteine 286 the chain carries Cysteine sulfenic acid (-SOH). Lysine 457 and glycine 460 together coordinate K(+). The Charge relay system role is filled by glutamate 464.

This sequence belongs to the aldehyde dehydrogenase family. In terms of assembly, dimer of dimers. It depends on K(+) as a cofactor.

The catalysed reaction is betaine aldehyde + NAD(+) + H2O = glycine betaine + NADH + 2 H(+). Its pathway is amine and polyamine biosynthesis; betaine biosynthesis via choline pathway; betaine from betaine aldehyde: step 1/1. Involved in the biosynthesis of the osmoprotectant glycine betaine. Catalyzes the irreversible oxidation of betaine aldehyde to the corresponding acid. This chain is Betaine aldehyde dehydrogenase, found in Stutzerimonas stutzeri (strain A1501) (Pseudomonas stutzeri).